We begin with the raw amino-acid sequence, 585 residues long: Arginine--tRNA ligase (585 aa).

Residues 131-141 (ANPTGPMHVGH) carry the 'HIGH' region motif.

The protein belongs to the class-I aminoacyl-tRNA synthetase family. In terms of assembly, monomer.

The protein localises to the cytoplasm. The enzyme catalyses tRNA(Arg) + L-arginine + ATP = L-arginyl-tRNA(Arg) + AMP + diphosphate. This chain is Arginine--tRNA ligase, found in Agrobacterium fabrum (strain C58 / ATCC 33970) (Agrobacterium tumefaciens (strain C58)).